The primary structure comprises 460 residues: MNRTKGDEEEYWNSSKFKAFTFDDEDDELSQLKESKRAVNSLRDFVDDDDDDDLERVSWTGEPVGSISWSIKETAGSSGSTSEGREQMKGRNSFYTQLPKPPSTYSLSSFFRGRTRPGSFQSLSDALSDTPAKTYSPELGRPKGEYRDYSNDWSLSDTVRRLRQGKVLIFLKRTLSKEILFRELEVRQVALRHLIHFLKEIGDQKLLLDLFRFLDRTEELALSHYREHLNIQDPEKRKEFLKTCIGLPFSAEDSAHVQDQYTLLERQIIIEANDRHLESSGQTEIFRKHPRKASILNMPLVTTLFYACFYHYTESEGTFSSPVNLKKTFKIPDRQYVLTALAARAKLRAWNDVDALFTTKNWLGYTKKRAPIGFHRVVEILHKNSAPVQILQEYVNLVEDVDTKLNLATKFKCHDVVIDTCRDLKDRQQLLAYRSKVDKGSAEEEKIDVILSSSQIRWKN.

T21 carries the phosphothreonine modification. Residues 70–101 (SIKETAGSSGSTSEGREQMKGRNSFYTQLPKP) are disordered. Low complexity predominate over residues 73–82 (ETAGSSGSTS). Position 115 is a phosphothreonine (T115). Phosphoserine occurs at positions 119, 122, and 128. Polar residues predominate over residues 121–133 (QSLSDALSDTPAK). Residues 121 to 141 (QSLSDALSDTPAKTYSPELGR) are disordered. Phosphothreonine is present on T130.

This sequence belongs to the SPE39 family. As to quaternary structure, interacts with VPS33B. Associates with the homotypic fusion and vacuole protein sorting (HOPS) complex; impaired by VPS33B. Interacts with RAB11A.

It is found in the cytoplasm. It localises to the cytoplasmic vesicle. Its subcellular location is the early endosome. The protein localises to the recycling endosome. The protein resides in the late endosome. Functionally, proposed to be involved in endosomal maturation implicating in part VPS33B. In epithelial cells, the VPS33B:VIPAS39 complex may play a role in the apical RAB11A-dependent recycling pathway and in the maintenance of the apical-basolateral polarity. May play a role in lysosomal trafficking, probably via association with the core HOPS complex in a discrete population of endosomes; the functions seems to be independent of VPS33B. May play a role in vesicular trafficking during spermatogenesis. May be involved in direct or indirect transcriptional regulation of E-cadherin. This chain is Spermatogenesis-defective protein 39 homolog (Vipas39), found in Rattus norvegicus (Rat).